Reading from the N-terminus, the 501-residue chain is ATP synthase subunit alpha (501 aa).

169–176 (GDRQTGKT) provides a ligand contact to ATP.

This sequence belongs to the ATPase alpha/beta chains family. As to quaternary structure, F-type ATPases have 2 components, CF(1) - the catalytic core - and CF(0) - the membrane proton channel. CF(1) has five subunits: alpha(3), beta(3), gamma(1), delta(1), epsilon(1). CF(0) has three main subunits: a(1), b(2) and c(9-12). The alpha and beta chains form an alternating ring which encloses part of the gamma chain. CF(1) is attached to CF(0) by a central stalk formed by the gamma and epsilon chains, while a peripheral stalk is formed by the delta and b chains.

The protein localises to the cell membrane. The catalysed reaction is ATP + H2O + 4 H(+)(in) = ADP + phosphate + 5 H(+)(out). In terms of biological role, produces ATP from ADP in the presence of a proton gradient across the membrane. The alpha chain is a regulatory subunit. This chain is ATP synthase subunit alpha, found in Desulforamulus reducens (strain ATCC BAA-1160 / DSM 100696 / MI-1) (Desulfotomaculum reducens).